A 202-amino-acid polypeptide reads, in one-letter code: FMN-dependent NADH:quinone oxidoreductase (202 aa).

FMN is bound by residues Ser10 and 95 to 98 (MYNF).

The protein belongs to the azoreductase type 1 family. Homodimer. It depends on FMN as a cofactor.

It catalyses the reaction 2 a quinone + NADH + H(+) = 2 a 1,4-benzosemiquinone + NAD(+). The enzyme catalyses N,N-dimethyl-1,4-phenylenediamine + anthranilate + 2 NAD(+) = 2-(4-dimethylaminophenyl)diazenylbenzoate + 2 NADH + 2 H(+). Its function is as follows. Quinone reductase that provides resistance to thiol-specific stress caused by electrophilic quinones. In terms of biological role, also exhibits azoreductase activity. Catalyzes the reductive cleavage of the azo bond in aromatic azo compounds to the corresponding amines. The sequence is that of FMN-dependent NADH:quinone oxidoreductase from Alkalilimnicola ehrlichii (strain ATCC BAA-1101 / DSM 17681 / MLHE-1).